A 177-amino-acid polypeptide reads, in one-letter code: MTDTATRLAFARAAQAQRRLHRRPPASPRASPGARDGGSPTQRCGQAYESAALRWLARQGLRPLARNLRCRAGEIDLAMRDGEVLVLVEVRARAHAGYGGAAASIGASKQGRLARAAALLLPVLLRRHWPGAPPPVRFDVVAFEAGRPHWLRGAFWLAEHAPAQGRRGQDAQGWRVR.

Residues alanine 13–arginine 43 are disordered.

Belongs to the UPF0102 family.

The protein is UPF0102 protein BPP4042 of Bordetella parapertussis (strain 12822 / ATCC BAA-587 / NCTC 13253).